We begin with the raw amino-acid sequence, 158 residues long: Fluoride-specific ion channel FluC 2 (158 aa).

A run of 4 helical transmembrane segments spans residues 25–45, 63–83, 95–115, and 126–146; these read AWHGQAPVVAVVALGGGIGGT, WTTFWVNVVGCAVIGVFMVVI, PFFGTGVLGGFTTFSTYAVDI, and TALAYLAATLLAALAAVRLAA. Na(+) is bound by residues glycine 103 and threonine 106.

It belongs to the fluoride channel Fluc/FEX (TC 1.A.43) family.

The protein resides in the cell membrane. It catalyses the reaction fluoride(in) = fluoride(out). Its activity is regulated as follows. Na(+) is not transported, but it plays an essential structural role and its presence is essential for fluoride channel function. Its function is as follows. Fluoride-specific ion channel. Important for reducing fluoride concentration in the cell, thus reducing its toxicity. In Streptomyces avermitilis (strain ATCC 31267 / DSM 46492 / JCM 5070 / NBRC 14893 / NCIMB 12804 / NRRL 8165 / MA-4680), this protein is Fluoride-specific ion channel FluC 2.